We begin with the raw amino-acid sequence, 264 residues long: 2-dehydro-3-deoxy-D-gluconate 5-dehydrogenase (264 aa).

14–38 serves as a coordination point for NAD(+); the sequence is LVTGSTHGLGMAMAKGLGLAGATIV. Substrate is bound at residue Ser147. Tyr160 acts as the Proton acceptor in catalysis.

This sequence belongs to the short-chain dehydrogenases/reductases (SDR) family. In terms of assembly, homotetramer.

The protein localises to the cytoplasm. It carries out the reaction 2-dehydro-3-deoxy-D-gluconate + NAD(+) = 3-deoxy-D-glycero-2,5-hexodiulosonate + NADH + H(+). 2-dehydro-3-deoxy-D-gluconate 5-dehydrogenase involved in ulvan degradation. Ulvan is the main polysaccharide component of the Ulvales (green seaweed) cell wall. It is composed of disaccharide building blocks comprising 3-sulfated rhamnose (Rha3S) linked to D-glucuronic acid (GlcA), L-iduronic acid (IduA), or D-xylose (Xyl). Catalyzes the reversible reduction of 2,5-diketo-3-deoxygluconate (DKII or 4,6-dihydroxy-2,5-dioxohexanoate) into 2-keto-3-deoxygluconate (KDG or 2-dehydro-3-deoxygluconate) with a concomitant oxidation of NADH. The sequence is that of 2-dehydro-3-deoxy-D-gluconate 5-dehydrogenase (kduD) from Formosa agariphila (strain DSM 15362 / KCTC 12365 / LMG 23005 / KMM 3901 / M-2Alg 35-1).